A 181-amino-acid chain; its full sequence is Oligoribonuclease (181 aa).

One can recognise an Exonuclease domain in the interval 8–171 (LIWVDLEMTG…DDIRESIAEL (164 aa)). Residue tyrosine 129 is part of the active site.

This sequence belongs to the oligoribonuclease family.

Its subcellular location is the cytoplasm. Functionally, 3'-to-5' exoribonuclease specific for small oligoribonucleotides. This Vibrio parahaemolyticus serotype O3:K6 (strain RIMD 2210633) protein is Oligoribonuclease.